We begin with the raw amino-acid sequence, 298 residues long: Dihydrodipicolinate reductase-like protein CRR1, chloroplastic (298 aa).

The N-terminal 25 residues, 1–25 (MAAVNCHFFQLSRHLKPSRPSFSCS), are a transit peptide targeting the chloroplast. 160-163 (APTL) lines the NAD(+) pocket.

Belongs to the DapB family. Expressed specifically in leaves.

It is found in the plastid. The protein localises to the chloroplast stroma. Its function is as follows. Dihydrodipicolinate reductase (DHPR)-like protein that may not function as DHPR in lysine biosynthesis. Required for both formation and activity of the chloroplast NAD(P)H dehydrogenase (NDH) complex of the photosynthetic electron transport chain. May function in assembly or stabilization of the NDH complex. The chain is Dihydrodipicolinate reductase-like protein CRR1, chloroplastic from Arabidopsis thaliana (Mouse-ear cress).